Here is a 235-residue protein sequence, read N- to C-terminus: Maximins-S type A (235 aa).

Residues 1–18 form the signal peptide; that stretch reads MNFNYFILVLFFITSGHA. 2 consecutive propeptides follow at residues 19 to 35 and 52 to 65; these read KSETRDVHQEAENHIKR and SAEEQNLAEDLVKR. Asparagine 83 is modified (asparagine amide). Residues 87–100 constitute a propeptide that is removed on maturation; the sequence is SAEEQDLAEDLVTR. An Asparagine amide modification is found at asparagine 118. Positions 122–135 are excised as a propeptide; it reads SAEEQDLAEDLVKR. Asparagine 153 carries the asparagine amide modification. Positions 157–170 are excised as a propeptide; it reads SAEEQDLAEDLVTR. Residue lysine 188 is modified to Lysine amide. A propeptide spanning residues 192–205 is cleaved from the precursor; it reads SAEDQDLAEDLVTR. Residue lysine 223 is modified to Lysine amide. A propeptide spanning residues 227-235 is cleaved from the precursor; sequence SAEQEKDMK.

Belongs to the maximin-S family. In terms of tissue distribution, expressed by the skin dorsal glands.

The protein localises to the secreted. Maximin-S1 has no antimicrobial activity. Has no hemolytic activity. In terms of biological role, maximin-S2 has an activity against mycoplasma but has no activity against common Gram-positive and Gram-negative bacteria nor fungi. Has no hemolytic activity. Functionally, maximin-S3 has an activity against mycoplasma but has no activity against common Gram-positive and Gram-negative bacteria nor fungi. Has no hemolytic activity. Its function is as follows. Maximin-S4 has an activity against mycoplasma but has no activity against common Gram-positive and Gram-negative bacteria nor fungi. Has no hemolytic activity. Maximin-S5 has an activity against mycoplasma but has no activity against common Gram-positive and Gram-negative bacteria nor fungi. Has no hemolytic activity. The chain is Maximins-S type A from Bombina maxima (Giant fire-bellied toad).